A 343-amino-acid polypeptide reads, in one-letter code: MVKVAILGASGGVGQPLSLLLKLSPYVSELALYDIRAAEGIGKDLSHINTNSSCVGYDKDSIENTLSNAQVVLIPAGVPRKPGLTRDDLFKMNAGIVKSLVTAVGKFAPNARILVISNPVNSLVPIAVETLKKMGKFKPGNVMGVTNLDLVRAETFLVDYLMLKNPKIGQEQDKTTMHRKVTVIGGHSGETIIPIITDKSLVFQLDKQYEHFIHRVQFGGDEIVKAKQGAGSATLSMAFAGAKFAEEVLRSFHNEKPETESLSAFVYLPGLKNGKKAQQLVGDNSIEYFSLPIVLRNGSVVSIDTSVLEKLSPREEQLVNTAVKELRKNIEKGKSFILDSSKL.

NAD(+) contacts are provided by residues 8–14 (GASGGVG) and D34. Substrate-binding residues include R80 and R86. Residues N93 and 116-118 (ISN) contribute to the NAD(+) site. 2 residues coordinate substrate: N118 and R152. The Proton acceptor role is filled by H187. M237 is a binding site for NAD(+).

This sequence belongs to the LDH/MDH superfamily. MDH type 1 family. Homodimer.

The protein resides in the peroxisome. The enzyme catalyses (S)-malate + NAD(+) = oxaloacetate + NADH + H(+). The protein is Malate dehydrogenase, peroxisomal (MDH3) of Saccharomyces cerevisiae (strain ATCC 204508 / S288c) (Baker's yeast).